Reading from the N-terminus, the 1053-residue chain is Ubiquitin-like modifier-activating enzyme 6 (1053 aa).

Residue Met1 is modified to N-acetylmethionine. Arg46 contributes to the ATP binding site. Position 54 is a phosphothreonine (Thr54). Residues Ala470 and Asp497 each contribute to the ATP site. Mg(2+) contacts are provided by Asp499 and Glu502. ATP is bound by residues Asn505, Arg508, Gln509, and Lys521. Residue Lys544 is modified to N6-acetyllysine. ATP is bound at residue Val545. Residue Asp569 coordinates Mg(2+). Residue Asn570 coordinates ATP. Cys625 acts as the Glycyl thioester intermediate in catalysis. Lys729 carries the post-translational modification N6-acetyllysine. Ser737 carries the post-translational modification Phosphoserine.

This sequence belongs to the ubiquitin-activating E1 family. In terms of assembly, forms a thioester with UBD in cells stimulated with tumor necrosis factor-alpha (TNFa) and interferon-gamma (IFNg).

It carries out the reaction ATP + ubiquitin + [E1 ubiquitin-activating enzyme]-L-cysteine = AMP + diphosphate + S-ubiquitinyl-[E1 ubiquitin-activating enzyme]-L-cysteine.. The protein operates within protein modification; protein ubiquitination. Its function is as follows. Activates ubiquitin by first adenylating its C-terminal glycine residue with ATP, and thereafter linking this residue to the side chain of a cysteine residue in E1, yielding a ubiquitin-E1 thioester and free AMP. Specific for ubiquitin, does not activate ubiquitin-like peptides. Also activates UBD/FAT10 conjugation via adenylation of its C-terminal glycine. Differs from UBE1 in its specificity for substrate E2 charging. Does not charge cell cycle E2s, such as CDC34. Essential for embryonic development. The protein is Ubiquitin-like modifier-activating enzyme 6 (Uba6) of Mus musculus (Mouse).